A 104-amino-acid chain; its full sequence is Large ribosomal subunit protein uL24 (104 aa).

It belongs to the universal ribosomal protein uL24 family. Part of the 50S ribosomal subunit.

Functionally, one of two assembly initiator proteins, it binds directly to the 5'-end of the 23S rRNA, where it nucleates assembly of the 50S subunit. Its function is as follows. One of the proteins that surrounds the polypeptide exit tunnel on the outside of the subunit. This is Large ribosomal subunit protein uL24 from Rhodopseudomonas palustris (strain BisB5).